We begin with the raw amino-acid sequence, 255 residues long: Acetyl-coenzyme A carboxylase carboxyl transferase subunit alpha (255 aa).

A CoA carboxyltransferase C-terminal domain is found at Met-1–Arg-235.

Belongs to the AccA family. Acetyl-CoA carboxylase is a heterohexamer composed of biotin carboxyl carrier protein (AccB), biotin carboxylase (AccC) and two subunits each of ACCase subunit alpha (AccA) and ACCase subunit beta (AccD).

It is found in the cytoplasm. The enzyme catalyses N(6)-carboxybiotinyl-L-lysyl-[protein] + acetyl-CoA = N(6)-biotinyl-L-lysyl-[protein] + malonyl-CoA. It participates in lipid metabolism; malonyl-CoA biosynthesis; malonyl-CoA from acetyl-CoA: step 1/1. Component of the acetyl coenzyme A carboxylase (ACC) complex. First, biotin carboxylase catalyzes the carboxylation of biotin on its carrier protein (BCCP) and then the CO(2) group is transferred by the carboxyltransferase to acetyl-CoA to form malonyl-CoA. The chain is Acetyl-coenzyme A carboxylase carboxyl transferase subunit alpha from Streptococcus pneumoniae serotype 2 (strain D39 / NCTC 7466).